The primary structure comprises 279 residues: NAD kinase (279 aa).

The Proton acceptor role is filled by Asp57. Residues 57–58 (DG), 133–134 (NE), Arg159, Asp161, 172–177 (TAYNKS), and Ala196 each bind NAD(+).

The protein belongs to the NAD kinase family. Requires a divalent metal cation as cofactor.

The protein localises to the cytoplasm. The enzyme catalyses NAD(+) + ATP = ADP + NADP(+) + H(+). Involved in the regulation of the intracellular balance of NAD and NADP, and is a key enzyme in the biosynthesis of NADP. Catalyzes specifically the phosphorylation on 2'-hydroxyl of the adenosine moiety of NAD to yield NADP. The chain is NAD kinase from Streptococcus thermophilus (strain CNRZ 1066).